The sequence spans 99 residues: Nucleoid-associated protein EbfC (99 aa).

The protein belongs to the YbaB/EbfC family. As to quaternary structure, homodimer.

The protein resides in the cytoplasm. The protein localises to the nucleoid. In terms of biological role, binds to DNA and alters its conformation. May be involved in regulation of gene expression, nucleoid organization and DNA protection. This is Nucleoid-associated protein EbfC from Borreliella burgdorferi (strain ZS7) (Borrelia burgdorferi).